The primary structure comprises 626 residues: MAKREFKAESKRLLDIMINSIYSQKEVFLRELISNASDAIDKIYYKALTDDSLTFNKDDYYIKISADKENRTLTIADTGIGMTKEELEEHLGTIAKSGSLAFKQENELKDGHDIIGQFGVGFYAAFMVADTVTVITKAHGSDEAHQWESAGADGYTIEPAAKESAGTDVILKLKENTDDENYDEYLDVHRLKAIIKTYSDFIRYPIKMDVAVNKPKEGAENEFEEVQEEQTVNSMVPIWRKNKSELKDEDYEAFYKEKHYGFDKPLAHIHTSVDGAVRYHAILFIPENIPFNYYTKEFEKGLELYSNGVLIMEKCPDLLPDHFSFVKGMVDSEDLSLNISREMLQHDRQLKLIAKNISKKIKNELKSLLKNDREKYESFYQSFGRQLKFGVYNDFGAHKDLLKDLLLFYSSKEKKLVTLEEYVSRMPEDQKYIYYASGDSYDRIEKLPQTELVSEKGYEILYFTEDIDEFAIKMLANYQEKEFKSVSSGDLGIENDDEQNQSDGDDSQYKDLFEEMKKTLDGKVKSVRASKRLKTHSVCLAADGEVTIEMEKILNAMPDNQHVKADKVLEINTNHEVFKTLQNAFDNDKDKFKLYTGLLYNQALLIEGLPIEDPVEFTNDICKVMA.

The interval 1–341 (MAKREFKAES…SEDLSLNISR (341 aa)) is a; substrate-binding. The interval 342 to 552 (EMLQHDRQLK…DGEVTIEMEK (211 aa)) is b. The tract at residues 553–626 (ILNAMPDNQH…FTNDICKVMA (74 aa)) is c.

This sequence belongs to the heat shock protein 90 family. In terms of assembly, homodimer.

The protein localises to the cytoplasm. Functionally, molecular chaperone. Has ATPase activity. The protein is Chaperone protein HtpG of Bacillus licheniformis (strain ATCC 14580 / DSM 13 / JCM 2505 / CCUG 7422 / NBRC 12200 / NCIMB 9375 / NCTC 10341 / NRRL NRS-1264 / Gibson 46).